A 268-amino-acid polypeptide reads, in one-letter code: uncharacterized protein (268 aa).

Helical transmembrane passes span 32 to 52, 70 to 90, 125 to 145, and 237 to 257; these read SLLL…IFFI, VFVG…AFLF, GVSS…FYIF, and IKYI…AYLT.

The protein belongs to the CbiQ family.

The protein resides in the cell membrane. This is an uncharacterized protein from Methanocaldococcus jannaschii (strain ATCC 43067 / DSM 2661 / JAL-1 / JCM 10045 / NBRC 100440) (Methanococcus jannaschii).